The sequence spans 196 residues: Large ribosomal subunit protein bL25 (196 aa).

This sequence belongs to the bacterial ribosomal protein bL25 family. CTC subfamily. Part of the 50S ribosomal subunit; part of the 5S rRNA/L5/L18/L25 subcomplex. Contacts the 5S rRNA. Binds to the 5S rRNA independently of L5 and L18.

This is one of the proteins that binds to the 5S RNA in the ribosome where it forms part of the central protuberance. This chain is Large ribosomal subunit protein bL25, found in Amoebophilus asiaticus (strain 5a2).